The primary structure comprises 141 residues: Putative inactive deoxyuridine 5'-triphosphate nucleotidohydrolase-like protein FLJ16323 (141 aa).

Belongs to the dUTPase family.

In Homo sapiens (Human), this protein is Putative inactive deoxyuridine 5'-triphosphate nucleotidohydrolase-like protein FLJ16323.